The chain runs to 246 residues: Phosducin (246 aa).

The segment covering 1–14 (MEEAKSQSLEEDFE) has biased composition (acidic residues). The interval 1 to 70 (MEEAKSQSLE…GKDSKERVSR (70 aa)) is disordered. The Phosducin domain occupies 1–244 (MEEAKSQSLE…LEHTKIEEED (244 aa)). The segment covering 60-69 (NGKDSKERVS) has biased composition (basic and acidic residues). Ser-73 is subject to Phosphoserine; by PKA. Positions 111–246 (YGFVYELETG…HTKIEEEDVE (136 aa)) are thioredoxin fold.

This sequence belongs to the phosducin family. In terms of assembly, forms a complex with the beta and gamma subunits of the GTP-binding protein, transducin. Interacts with CRX. In terms of processing, light-induced changes in cyclic nucleotide levels modulate the phosphorylation of this protein by cAMP kinase.

It localises to the cytoplasm. The protein resides in the cytosol. Its subcellular location is the nucleus. The protein localises to the cell projection. It is found in the cilium. It localises to the photoreceptor outer segment. The protein resides in the photoreceptor inner segment. Functionally, may participate in the regulation of visual phototransduction or in the integration of photoreceptor metabolism. Inhibits the transcriptional activation activity of the cone-rod homeobox CRX. The protein is Phosducin (PDC) of Homo sapiens (Human).